Consider the following 1254-residue polypeptide: DNA polymerase gamma (1254 aa).

Positions 1125 to 1137 (RKKENRIDDENKK) are enriched in basic and acidic residues. Disordered stretches follow at residues 1125-1145 (RKKENRIDDENKKKLTRKKNT) and 1202-1240 (YKKKPSQARTASSSPIRKTAKAVHSKKLPARKSSTTNRN). Residues 1208-1217 (QARTASSSPI) show a composition bias toward polar residues. A compositionally biased stretch (basic residues) spans 1219–1231 (KTAKAVHSKKLPA).

This sequence belongs to the DNA polymerase type-A family. The cofactor is Mg(2+).

It is found in the mitochondrion. It catalyses the reaction DNA(n) + a 2'-deoxyribonucleoside 5'-triphosphate = DNA(n+1) + diphosphate. Its function is as follows. Involved in the replication of mitochondrial DNA. In Saccharomyces cerevisiae (strain ATCC 204508 / S288c) (Baker's yeast), this protein is DNA polymerase gamma (MIP1).